Here is a 924-residue protein sequence, read N- to C-terminus: Periplasmic nitrate reductase (924 aa).

The segment at residues 1-30 (MNRRDFIKNTAIASAASVAGLSVPSSMLGA) is a signal peptide (tat-type signal). Residues 35 to 91 (WKWDKAVCRFCGTGCGIMIARKDGKIVATKGDPAAPVNRGLNCIKGYFNAKIMYGED) form the 4Fe-4S Mo/W bis-MGD-type domain. Residues cysteine 42, cysteine 45, cysteine 49, and cysteine 77 each coordinate [4Fe-4S] cluster. Residues lysine 79, glutamine 147, asparagine 172, cysteine 176, 209 to 216 (WGANMAEM), methionine 417, glutamine 421, asparagine 527, 552 to 553 (SD), lysine 575, aspartate 602, and 814 to 823 (TGRVLEHWHS) contribute to the Mo-bis(molybdopterin guanine dinucleotide) site. Tryptophan 890 contributes to the substrate binding site. Asparagine 898 and lysine 915 together coordinate Mo-bis(molybdopterin guanine dinucleotide).

Belongs to the prokaryotic molybdopterin-containing oxidoreductase family. NasA/NapA/NarB subfamily. As to quaternary structure, component of the periplasmic nitrate reductase NapAB complex composed of NapA and NapB. It depends on [4Fe-4S] cluster as a cofactor. Mo-bis(molybdopterin guanine dinucleotide) serves as cofactor. In terms of processing, predicted to be exported by the Tat system. The position of the signal peptide cleavage has not been experimentally proven.

The protein localises to the periplasm. The enzyme catalyses 2 Fe(II)-[cytochrome] + nitrate + 2 H(+) = 2 Fe(III)-[cytochrome] + nitrite + H2O. In terms of biological role, catalytic subunit of the periplasmic nitrate reductase complex NapAB. Receives electrons from NapB and catalyzes the reduction of nitrate to nitrite. This chain is Periplasmic nitrate reductase, found in Campylobacter jejuni subsp. jejuni serotype O:6 (strain 81116 / NCTC 11828).